A 1641-amino-acid polypeptide reads, in one-letter code: MTESSMKKLASTLLDAITDKDPLVQEQVCSALCSLGEARPVETLRACEEYLRQHDKLAHPYRAAVLRAMERVLSSRASELDKDTASTIILLASSEMTKTKDLVWDWQQAASGVLVAVGRQFISKVMEELLRRLHPGTLPHCAVLHTLASLSVANAFGVVPFLPSVLSSLLPVLGVAKQDTVRVAFCSALQRFSEGALEYLANLDRAPDPTVRKDAFATDIFSAYDVLFHQWLQSREAKLRLAVVEALGPMSHLLPSERLEEQLPKLLPGILALYKKHAETFYLSKSLGQILEAAVSVGSRTLETQLDALLAALHSQICVPVESSSPLVMSNQKEVLRCFTVLACSSPDRLLAFLLPRLDTSNERTRVGTLQVVRHVINSAAAQMEDKKPFILSSMRLPLLDTNSKVKRAVVQVISAMAHHGYLEQPGGEAMIEYIVQQCALPPEQEPEKPGPGSKDPKADSVRAISVRTLYLVSTTVDRMSHVLWPYLLQFLTPVRFTGALTPLCRSLVHLAQKRQEAGADAFLIQYDAHASLPSPYAVTGRLLVVSSSPYLGDGRGAAALRLLSVLHPNIHPLLGQHWETTVPLLLGYLDEHTEETLPQEEWEEKLLMFLRDTLAIISDNAWICQLSLELCRQLPCYDEAPQEKNFLYKCIGTTLGAASSKEVVRKHLQELLETARYQEEAEREGLACCFGICAISHLEDTLAQLEDFVRSEVFRKSIGILNIFKDRSENEVEKVKSALILCYGHVAARAPRELVLAKVESDILRNICQHFSTKVLGIKVETKDPALKLCLVQSVCMVSRAICSSTQAGSFHFTRKAELVAQMMEFIRAEPPDSLRTPIRKKAMLTCTYLVSVEPALDEQARADVIHGCLHSIMALLPEPKEEDGGCQKSLYLETLHALEDLLTSLLQRNMTPQGLQIMIEHLSPWIKSPRGHERARALGLSALLLRYFLEHLRVSALVPFHNLGLLIGLFSPRCADLWPATRQEAVDCVYSLLYLQLGYEGFSRDYRDDVAERLLSLKDGLVHPDPAILFHTCHSVGQIIAKRLPPDQLISLLLTMFEALGDPEKNCSRAATVMINCLLQERGGVLQEKVPEIVSVLRSKLQEAQGEHVLPAAQHSVYLLATQHCAAVVSSLLGSPLPLDSHTCMLWRALAVEPRLAAQVLGLLLEKMSRDVPFKESRAFLLGRTPDRVATLLPLSATCALFEVMSTPAAGPAVLELYPQLFVVLLLRVSCTVGVQLPRNLQAQERRGASPALATRNLEPCSSAVDTLRSMLLRSGSEDVVQRMDLEGGWELLRTSAGHEEGATRLARAMAEHAGPRLPLVLKTLACTHSSAYENQRVTTTAFLAELLNSNVANDLMLLDSLLESLAARQKDTCASVRRLVLRGLANLASGCPDKVRTHGPQLLTAMIGGLDDGDNPHSPVALEAMLGLARLVHLVESWDLRSGLLHVAIRIRPFFDSEKMEFRTASIRLFGHLNKVCHGDCEDVFLDQVVGGLAPLLLHLQDPQATVASACRFALRMCGPNLACEELSAAFQKHLQEGRALHFGEFLNTTCKHLMHHFPDLLGRLLTTCLFYFKSSWENVRAAAPLFTGFLVLHSEPRQQPQVDLDQLIAALQILLKDPAPEVRTRAAEALGRLVKLA.

HEAT repeat units follow at residues Glu-3–Val-41, Val-159–Glu-198, Cys-344–Ala-382, Glu-385–Leu-423, Pro-1048–Gly-1086, Leu-1358–Asp-1396, and Gln-1605–Ala-1641.

This sequence belongs to the MROH1 family. In terms of assembly, homooligomer; homooligomerizes at lysosome scission sites.

The protein localises to the lysosome membrane. Its function is as follows. Lysosome fission factor. Recruited to lysosomes by RAB7 (RAB7A or RAB7B) at scission sites and homooligomerizes to mediate the constriction and scission of lysosomal tubules. May sever membranes by inserting amphipathic helices into one bilayer leaflet. Lysosome fission is required to maintain their steady-state number, shape, size, composition and function, and to accomplish regeneration. This Homo sapiens (Human) protein is Maestro heat-like repeat-containing protein family member 1.